Here is a 116-residue protein sequence, read N- to C-terminus: Ribonuclease P protein component (116 aa).

Belongs to the RnpA family. Consists of a catalytic RNA component (M1 or rnpB) and a protein subunit.

It catalyses the reaction Endonucleolytic cleavage of RNA, removing 5'-extranucleotides from tRNA precursor.. RNaseP catalyzes the removal of the 5'-leader sequence from pre-tRNA to produce the mature 5'-terminus. It can also cleave other RNA substrates such as 4.5S RNA. The protein component plays an auxiliary but essential role in vivo by binding to the 5'-leader sequence and broadening the substrate specificity of the ribozyme. The chain is Ribonuclease P protein component from Gluconacetobacter diazotrophicus (strain ATCC 49037 / DSM 5601 / CCUG 37298 / CIP 103539 / LMG 7603 / PAl5).